The sequence spans 243 residues: Coproheme decarboxylase (243 aa).

Tyrosine 145 is a catalytic residue. Histidine 168 is a binding site for Fe-coproporphyrin III.

Belongs to the ChdC family. Type 2 subfamily. Requires Fe-coproporphyrin III as cofactor.

The catalysed reaction is Fe-coproporphyrin III + 2 H2O2 + 2 H(+) = heme b + 2 CO2 + 4 H2O. It catalyses the reaction Fe-coproporphyrin III + H2O2 + H(+) = harderoheme III + CO2 + 2 H2O. It carries out the reaction harderoheme III + H2O2 + H(+) = heme b + CO2 + 2 H2O. The protein operates within porphyrin-containing compound metabolism; protoheme biosynthesis. In terms of biological role, involved in coproporphyrin-dependent heme b biosynthesis. Catalyzes the decarboxylation of Fe-coproporphyrin III (coproheme) to heme b (protoheme IX), the last step of the pathway. The reaction occurs in a stepwise manner with a three-propionate intermediate. The protein is Coproheme decarboxylase of Streptomyces coelicolor (strain ATCC BAA-471 / A3(2) / M145).